The chain runs to 358 residues: Serine/threonine-protein phosphatase 2A activator (358 aa).

The tract at residues 1 to 20 is disordered; that stretch reads MAEGERQPPPDSSEEAPPAT. Alanine 2 carries the post-translational modification N-acetylalanine. The ATP site is built by arginine 183, threonine 188, and glycine 189. Residues glycine 243 and aspartate 249 each contribute to the Mg(2+) site. ATP is bound by residues proline 339, glutamine 342, and histidine 343.

The protein belongs to the PTPA-type PPIase family. In terms of assembly, associates with PP2A heterodimeric core enzyme PP2A(D), composed of a 36 kDa catalytic subunit (subunit C) and a 65 kDa constant regulatory subunit (PR65 or subunit A). Interacts with the catalytic subunit PPP2CA (via C-terminus). Interacts with PPP2CB. As to expression, widely expressed.

It is found in the cytoplasm. It localises to the nucleus. It carries out the reaction [protein]-peptidylproline (omega=180) = [protein]-peptidylproline (omega=0). Its function is as follows. PPIases accelerate the folding of proteins. It catalyzes the cis-trans isomerization of proline imidic peptide bonds in oligopeptides. Acts as a regulatory subunit for serine/threonine-protein phosphatase 2A (PP2A). Modulates PP2A activity or substrate specificity, probably by inducing a conformational change in the catalytic subunit, a proposed direct target of the PPIase. Can reactivate inactive phosphatase PP2A-phosphatase methylesterase complexes (PP2A(i)) in presence of ATP and Mg(2+). Reversibly stimulates the variable phosphotyrosyl phosphatase activity of PP2A core heterodimer PP2A(D) in presence of ATP and Mg(2+) (in vitro). The phosphotyrosyl phosphatase activity is dependent of an ATPase activity of the PP2A(D):PPP2R4 complex. Is involved in apoptosis; the function appears to be independent from PP2A. This Homo sapiens (Human) protein is Serine/threonine-protein phosphatase 2A activator.